A 193-amino-acid chain; its full sequence is Ion-translocating oxidoreductase complex subunit A (193 aa).

The next 6 membrane-spanning stretches (helical) occupy residues 5 to 25, 39 to 59, 72 to 92, 102 to 122, 134 to 154, and 171 to 191; these read LLLL…FLGL, IGMS…SYLV, LTTM…EMVV, LLGI…VALL, IIYG…FSAM, and AIAM…TGLV.

The protein belongs to the NqrDE/RnfAE family. The complex is composed of six subunits: RnfA, RnfB, RnfC, RnfD, RnfE and RnfG.

Its subcellular location is the cell inner membrane. Its function is as follows. Part of a membrane-bound complex that couples electron transfer with translocation of ions across the membrane. The chain is Ion-translocating oxidoreductase complex subunit A from Colwellia psychrerythraea (strain 34H / ATCC BAA-681) (Vibrio psychroerythus).